The sequence spans 78 residues: Putative gastrointestinal growth factor xP1 (78 aa).

The signal sequence occupies residues 1–23 (MNYKVFCLVAIALIVGSIGSANG). One can recognise a P-type domain in the interval 30 to 73 (EQCSVERLARVNCGYSGITPQECTKQGCCFDSTIQDAPWCFYPR). 3 disulfides stabilise this stretch: Cys-32–Cys-58, Cys-42–Cys-57, and Cys-52–Cys-69.

As to expression, stomach mucosa.

It is found in the secreted. In terms of biological role, may act as a growth factor. This is Putative gastrointestinal growth factor xP1 (p1) from Xenopus laevis (African clawed frog).